A 57-amino-acid chain; its full sequence is MKFAKTFLLLFVVLLLLSIVMAEPKRGFGKLLRKVFKVGRRVAGSAAEISGSSGGEE.

Positions 1–24 (MKFAKTFLLLFVVLLLLSIVMAEP) are cleaved as a signal peptide.

It belongs to the limacoditoxin-2 (cecropin-like) family. In terms of tissue distribution, expressed by the venom secretory cell of the spine. The spine is a cuticular structure containing a single large nucleated venom-secreting cell at its base. It is an independent unit capable of producing, storing and injecting venom. On the back of D.vulnerans caterpillars, spines are grouped together by 50 to 100 to form scoli, of which there are eight in D.vulnerans.

The protein resides in the secreted. Its function is as follows. Peptide that induces pain in mammals and has insecticidal, antibacterial and antiparasitic activities. Induces partially reversible paralysis in D.melanogaster when tested at high doses. Shows a moderate antiparasitic activity against the major pathogenic nematode of ruminants (H.contortus, EC(50)=30.5 uM). Has potent or moderate antibacterial activities against A.baumannii (MIC&lt;0.25 ug/mL) and S.aureus (MIC=16 ug/mL). Has no activity on the other bacteria tested, nor on the fungus C.albicans. Strongly induces the increase of intracellular calcium in mice DRG neurons, which is a proxy for neuronal activation that would occur during nociception. This increase is due to influx of extracellular calcium, suggesting that the peptide forms pore or channel in neuronal cell membranes. In addition, intraplantar injection in mice provokes nocifensive behavior, suggesting a pain-inducing activity. The protein is DELTA-limacoditoxin(2)-Dv11 of Doratifera vulnerans (Mottled cup moth).